We begin with the raw amino-acid sequence, 159 residues long: Ribosomal RNA large subunit methyltransferase H (159 aa).

Residues L76, G108, and 127 to 132 (FGRMTY) each bind S-adenosyl-L-methionine.

Belongs to the RNA methyltransferase RlmH family. In terms of assembly, homodimer.

The protein localises to the cytoplasm. The enzyme catalyses pseudouridine(1915) in 23S rRNA + S-adenosyl-L-methionine = N(3)-methylpseudouridine(1915) in 23S rRNA + S-adenosyl-L-homocysteine + H(+). In terms of biological role, specifically methylates the pseudouridine at position 1915 (m3Psi1915) in 23S rRNA. This is Ribosomal RNA large subunit methyltransferase H from Carboxydothermus hydrogenoformans (strain ATCC BAA-161 / DSM 6008 / Z-2901).